A 147-amino-acid chain; its full sequence is uncharacterized protein (147 aa).

Positions 1–59 (MGAELVKWVKSHKIDAHIITFVAKMPYIDSIKLLEAGAKGCVWKTSHPAKLNRAIDSIS) constitute a Response regulatory domain. An HTH luxR-type domain is found at 78–143 (RYSSDNQLTN…ELIKTALRMG (66 aa)). Residues 102-121 (NKEIANFLQLSRKTVETHRL) constitute a DNA-binding region (H-T-H motif).

In terms of processing, overexpressed protein is phosphorylated in vitro by non-cognate histidine kinases BarA and UhpB.

This is an uncharacterized protein from Escherichia coli (strain K12).